We begin with the raw amino-acid sequence, 227 residues long: Cytidylate kinase (227 aa).

12–20 (GPSGAGKGT) lines the ATP pocket.

The protein belongs to the cytidylate kinase family. Type 1 subfamily.

The protein resides in the cytoplasm. It carries out the reaction CMP + ATP = CDP + ADP. It catalyses the reaction dCMP + ATP = dCDP + ADP. This Shigella sonnei (strain Ss046) protein is Cytidylate kinase.